A 141-amino-acid chain; its full sequence is Cystatin (141 aa).

The signal sequence occupies residues 1–26 (MVHSQLPVAAPLRLLCALLLLPSATM). The region spanning 29-129 (GGLSPRSVTD…CHFQVWSRPW (101 aa)) is the Cystatin domain. Positions 73 to 77 (QVVAG) match the Secondary area of contact motif. Intrachain disulfides connect cysteine 91-cysteine 107 and cysteine 120-cysteine 140.

This sequence belongs to the cystatin family. Expressed at a low level by the venom gland (at protein level).

The protein localises to the secreted. Functionally, inhibits various C1 cysteine proteases including cathepsin L, papain and cathepsin B. This protein has no toxic activity and its function in the venom is unknown. It may play a role as a housekeeping or regulatory protein. The chain is Cystatin from Oxyuranus scutellatus scutellatus (Australian taipan).